The following is a 122-amino-acid chain: Large ribosomal subunit protein uL14 (122 aa).

This sequence belongs to the universal ribosomal protein uL14 family. As to quaternary structure, part of the 50S ribosomal subunit. Forms a cluster with proteins L3 and L19. In the 70S ribosome, L14 and L19 interact and together make contacts with the 16S rRNA in bridges B5 and B8.

Its function is as follows. Binds to 23S rRNA. Forms part of two intersubunit bridges in the 70S ribosome. This Shewanella sp. (strain ANA-3) protein is Large ribosomal subunit protein uL14.